The sequence spans 1075 residues: Flocculation protein FLO5 (1075 aa).

Residues 1-24 (MTIAHHCIFLVILAFLALINVASG) form the signal peptide. Residues 74-249 (GGQTDISIDY…GTTVSDNFEG (176 aa)) form the PA14 domain. N-linked (GlcNAc...) asparagine glycans are attached at residues Asn135, Asn187, Asn203, and Asn262. The segment at 197–240 (DGSLPDNITGTVYMYAGYYYPLKVVYSNAVSWGTLPISVELPDG) is sugar recognition. A run of 8 repeats spans residues 278-322 (TTTE…STIT), 323-367 (TTTE…GLIT), 368-412 (TTTE…GLIT), 413-457 (TTTE…GLIT), 458-502 (TTTE…GLIS), 503-547 (TTTE…GLIT), 548-592 (TTTE…GLIT), and 593-637 (RTTE…ISSS). The tract at residues 278-637 (TTTEPWTGTF…RTPTTAISSS (360 aa)) is 8 X 45 AA approximate tandem repeats, Thr-rich. Composition is skewed to low complexity over residues 322 to 345 (TTTT…VTGT), 367 to 390 (TTTT…VTGT), 457 to 480 (TTTT…VTGT), and 547 to 570 (TTTT…VTGT). 4 disordered regions span residues 322-349 (TTTT…NGQP), 366-394 (ITTT…NGQP), 456-484 (ITTT…NGQP), and 546-574 (ITTT…NGQP). The N-linked (GlcNAc...) asparagine glycan is linked to Asn663. 2 repeat units span residues 667–686 (VISS…TSSS) and 687–706 (FISS…IFSE). The tract at residues 667–706 (VISSSVISSSVTSSLVTSSSFISSSVISSSTTTSTSIFSE) is 2 X 20 AA approximate tandem repeats, Ser-rich. Low complexity predominate over residues 702–762 (SIFSESSTSS…SLPPVTSATT (61 aa)). The tract at residues 702 to 781 (SIFSESSTSS…PATTTKTSEQ (80 aa)) is disordered. Asn749 is a glycosylation site (N-linked (GlcNAc...) asparagine). The segment covering 763-781 (GQETASSLPPATTTKTSEQ) has biased composition (polar residues). 3 tandem repeats follow at residues 775 to 825 (TTKT…CPIS), 847 to 897 (TTET…CPIS), and 898 to 948 (TTES…RPQT). The 3 X 51 AA approximate repeats, Ser/Thr-rich stretch occupies residues 775-948 (TTKTSEQTTL…TVYPTWRPQT (174 aa)). The segment covering 948–958 (TTNEQSVSSKM) has biased composition (polar residues). Disordered stretches follow at residues 948-980 (TTNE…AVTS) and 1016-1038 (SLTS…SSMV). 2 stretches are compositionally biased toward low complexity: residues 959-977 (NSAT…TKTA) and 1016-1026 (SLTSSGLSTMS). Residues 1027 to 1038 (QQPRSTPASSMV) show a composition bias toward polar residues. A lipid anchor (GPI-anchor amidated glycine) is attached at Gly1052. Residues 1053–1075 (SANSLLAGSGLSVFIASLLLAII) constitute a propeptide, removed in mature form.

The protein belongs to the flocculin family. Extensively O-glycosylated. In terms of processing, the GPI-anchor is attached to the protein in the endoplasmic reticulum and serves to target the protein to the cell surface. There, the glucosamine-inositol phospholipid moiety is cleaved off and the GPI-modified mannoprotein is covalently attached via its lipidless GPI glycan remnant to the 1,6-beta-glucan of the outer cell wall layer.

It localises to the secreted. The protein resides in the cell wall. It is found in the membrane. Cell wall protein that participates directly in adhesive cell-cell interactions during yeast flocculation, a reversible, asexual and Ca(2+)-dependent process in which cells adhere to form aggregates (flocs) consisting of thousands of cells. The lectin-like protein sticks out of the cell wall of flocculent cells and selectively binds mannose residues in the cell walls of adjacent cells. Activity is inhibited by mannose, but not by glucose, maltose, sucrose or galactose. The sequence is that of Flocculation protein FLO5 (FLO5) from Saccharomyces cerevisiae (strain ATCC 204508 / S288c) (Baker's yeast).